Here is a 422-residue protein sequence, read N- to C-terminus: UDP-N-acetylglucosamine 1-carboxyvinyltransferase (422 aa).

A phosphoenolpyruvate-binding site is contributed by 22–23; that stretch reads KN. Arg95 provides a ligand contact to UDP-N-acetyl-alpha-D-glucosamine. Cys119 serves as the catalytic Proton donor. 2-(S-cysteinyl)pyruvic acid O-phosphothioketal is present on Cys119. UDP-N-acetyl-alpha-D-glucosamine is bound by residues 124–128, Asp309, and Val331; that span reads RPIDQ.

The protein belongs to the EPSP synthase family. MurA subfamily.

It localises to the cytoplasm. The enzyme catalyses phosphoenolpyruvate + UDP-N-acetyl-alpha-D-glucosamine = UDP-N-acetyl-3-O-(1-carboxyvinyl)-alpha-D-glucosamine + phosphate. It participates in cell wall biogenesis; peptidoglycan biosynthesis. In terms of biological role, cell wall formation. Adds enolpyruvyl to UDP-N-acetylglucosamine. The sequence is that of UDP-N-acetylglucosamine 1-carboxyvinyltransferase from Anaeromyxobacter dehalogenans (strain 2CP-C).